We begin with the raw amino-acid sequence, 1122 residues long: TSET complex member tstF (1122 aa).

Over residues 88–126 (SSSASGINGTNNNNSGSNSSNNNNNNNGSLSNSPNNNNN) the composition is skewed to low complexity. Disordered stretches follow at residues 88–131 (SSSA…AFIG) and 178–215 (QTLHNRSPNNTIKLSPNSSNNDSLNNNNNNINNNSTNS). Over residues 178-190 (QTLHNRSPNNTIK) the composition is skewed to polar residues. The segment covering 191 to 215 (LSPNSSNNDSLNNNNNNINNNSTNS) has biased composition (low complexity). WD repeat units follow at residues 298–337 (FENKSPNSVEFFSNSPFVAFGGPDSMIRLWNTEKWEIEKQ), 342–381 (PKGTIVKLKAIEIEGEFLVSGGTDGFVCVWNVKTGSLATQ), and 383–422 (SKVHEIVDLSYDYVTGQVMALTQDRHIMIYDLNTLKEVSK). The segment at 731-775 (NGSVGGSSSNNSANSNNSNNNNNNNNNNSNNSNNNNNSSQPILEP) is disordered.

As to quaternary structure, component of the TSET complex, a heterohexamer composed of tstA, tstB, tstC, tstD, tstE and tstF, which may act in plasma membrane turnover. tstA, tstB, tstC and tstD are likely to be the core complex members with tstE and tstF acting as associated scaffold proteins.

The protein is TSET complex member tstF of Dictyostelium discoideum (Social amoeba).